The primary structure comprises 279 residues: Movement protein (279 aa).

Residues 246 to 279 (SESEELNVESPPAAIGSSSASRSEAFRPQVVNGL) are disordered. Over residues 254 to 268 (ESPPAAIGSSSASRS) the composition is skewed to low complexity.

The protein belongs to the cucumovirus movement protein family.

It is found in the host cell junction. Its subcellular location is the host plasmodesma. In terms of biological role, transports viral genome to neighboring plant cells directly through plasmosdesmata, without any budding. The movement protein allows efficient cell to cell propagation, by bypassing the host cell wall barrier. Acts by forming a tubular structure at the host plasmodesmata, enlarging it enough to allow free passage of virion capsids. This is Movement protein from Cucumber mosaic virus (strain O) (CMV).